A 60-amino-acid chain; its full sequence is Mastoparan-D (60 aa).

The signal sequence occupies residues 1–27 (MKNTILILFTAFIALLGFFGMSAEALA). AXPX repeat units follow at residues 27-30 (ADPI), 31-34 (ADPV), 35-38 (AGPN), and 41-44 (ADPE). A propeptide spanning residues 28–45 (DPIADPVAGPNPEADPEA) is cleaved from the precursor. Residue L59 is modified to Leucine amide.

Belongs to the MCD family. Mastoparan subfamily. Expressed by the venom gland.

It localises to the secreted. Its subcellular location is the target cell membrane. In terms of biological role, antimicrobial and mast cell degranulating peptide. Has broad spectrum antibacterial activity against both Gram-positive and Gram-negative bacteria (S.aureus MIC=24-32 ug/ml, S.xylosus MIC=2 ug/ml, S.alactolyticus MIC=16 ug/ml, C.koseri MIC=4 ug/ml, E.coli MIC=8 ug/ml, K.pneumoniae MIC=32 ug/ml, P.aerugiosa MIC=128 ug/ml, S.choleraesuis MIC=16 ug/ml, S.typhimurium MIC=32 ug/ml, V.parahamelytics MIC=32 ug/ml). Affects membrane permeability of E.coli. Shows hemolytic activities on sheep, chicken and human erythrocytes. Its mast cell degranulation activity may be related to the activation of G-protein coupled receptors in mast cells as well as interaction with other proteins located in cell endosomal membranes in the mast cells. The protein is Mastoparan-D of Vespa ducalis (Black-tailed hornet).